Here is a 1039-residue protein sequence, read N- to C-terminus: MEKLDRYLQENFDVPAKNPSEEAQRRWRQAVGTIVKNRRRRFRWVPDLERRSLDKAKVRSTQEKIRVALYVQQAALIFSDGAKKKEYKLTGDIIKAGYAINPDELALITSKHDSKALKMHGGVDGISIKVRSSFDHGIYASELDTRQNIYGVNRYAEKPSRSFWMFVWDALQDMTLIILMVCALLSVAVGLATEGWPKGMYDGLGIILSIFLVVMVTAVSDYKQSLQFKELDNEKKKIFIHVTRDGRRQKISIYDLVVGDIVHLSIGDQVPADGLYIHGYSLLIDESSLSGESDPVYVSQDKPFILAGTKVQDGSAKMIVTAVGMRTEWGKLMSTLSEGGEDETPLQVKLNGVATIIGKIGLVFAILTFLVLLVRFLIDKGMTVGLLKWYSTDALTIVNYFATAVTIIVVAVPEGLPLAVTLSLAFAMKKLMNDKALVRHLSACETMGSAGTICTDKTGTLTTNHMVVDKIWISEVSKSVTSNTISGELNSVVSSSTLSLLLQGIFENTSAEVVKEKDGKQTVLGTPTERAILEFGLGLKGDHDAEYRACTKVKVEPFNSVKKKMAVLISLPNGTSRWFCKGASEIILQMCDMMVDGDGNAIPLSEAQRKNILDTINSFASDALRTLCLAYKEVDDDIDDNADSPTSGFTLIAIFGIKDPVRPGVKDAVKTCMSAGITVRMVTGDNINTAKAIAKECGILTEDGVAIEGPEFHSKSTEEMRDLILNIQVMARSLPLDKHTLVTNLRGMFDEVVSVTGDGTNDAPALHEADIGLAMGIAGTEVAKESADVIVLDDNFTTIINVARWGRAVYINIQKFVQFQLTVNIVALVINFVSACIIGSAPLTAVQLLWVNMIMDTLGALALATEPPNDEMMKRPPVRKGESFITKFMWRNIMGQSLYQLFVLGALMFGGERLLNIKGADSKSIINTLIFNSFVFCQVFNEINSREMQKINVFRGIISNWIFIAVIAATVAFQVVIIEFLGTFASTVPLNWQHWLLSVGLGSISLIVGVILKCIPVGSGETSATPNGYRPLANGPDDI.

At Met-1–Thr-175 the chain is on the cytoplasmic side. A run of 2 helical transmembrane segments spans residues Leu-176–Trp-196 and Gly-199–Val-219. The Cytoplasmic portion of the chain corresponds to Ser-220–Lys-250. The next 2 helical transmembrane spans lie at Ile-251–Pro-271 and Val-353–Leu-373. At Val-374 to Thr-406 the chain is on the cytoplasmic side. The helical transmembrane segment at Ile-407–Ala-427 threads the bilayer. Catalysis depends on Asp-456, which acts as the 4-aspartylphosphate intermediate. Asp-758 and Asp-762 together coordinate Mg(2+). Residues Ile-825–Ala-845 traverse the membrane as a helical segment. The Cytoplasmic portion of the chain corresponds to Val-846–Gln-847. Transmembrane regions (helical) follow at residues Leu-848–Pro-868 and Asn-892–Glu-912. The Cytoplasmic portion of the chain corresponds to Arg-913–Asn-960. Transmembrane regions (helical) follow at residues Trp-961–Leu-981 and Trp-995–Ile-1015. At Pro-1016 to Ile-1039 the chain is on the cytoplasmic side.

This sequence belongs to the cation transport ATPase (P-type) (TC 3.A.3) family. Type IIB subfamily.

Its subcellular location is the membrane. The catalysed reaction is Ca(2+)(in) + ATP + H2O = Ca(2+)(out) + ADP + phosphate + H(+). With respect to regulation, activated by calmodulin. In terms of biological role, this magnesium-dependent enzyme catalyzes the hydrolysis of ATP coupled with the translocation of calcium from the cytosol out of the cell, into the endoplasmic reticulum, or into organelles. This Oryza sativa subsp. japonica (Rice) protein is Probable calcium-transporting ATPase 9, plasma membrane-type.